The following is a 701-amino-acid chain: Glycine--tRNA ligase beta subunit (701 aa).

Belongs to the class-II aminoacyl-tRNA synthetase family. In terms of assembly, tetramer of two alpha and two beta subunits.

The protein localises to the cytoplasm. The enzyme catalyses tRNA(Gly) + glycine + ATP = glycyl-tRNA(Gly) + AMP + diphosphate. The chain is Glycine--tRNA ligase beta subunit from Bradyrhizobium sp. (strain BTAi1 / ATCC BAA-1182).